The following is a 324-amino-acid chain: NAD(P)H-dependent D-xylose reductase I,II (324 aa).

Tyrosine 54 (proton donor) is an active-site residue. Position 116 (histidine 116) interacts with substrate. Residues 171–172 (SN), 220–229 (SSFGPQSFLE), and 276–286 (KSNNPERLAQN) each bind NAD(+).

The protein belongs to the aldo/keto reductase family.

It carries out the reaction xylitol + NAD(+) = D-xylose + NADH + H(+). The enzyme catalyses xylitol + NADP(+) = D-xylose + NADPH + H(+). The protein operates within carbohydrate metabolism; D-xylose degradation. Its function is as follows. Reduces D-xylose into xylitol. Has a preference for NADPH, but can also utilize NADH as cosubstrate. This Candida tropicalis (Yeast) protein is NAD(P)H-dependent D-xylose reductase I,II (xyrA).